The chain runs to 265 residues: GTP cyclohydrolase FolE2 (265 aa).

Belongs to the GTP cyclohydrolase IV family.

It catalyses the reaction GTP + H2O = 7,8-dihydroneopterin 3'-triphosphate + formate + H(+). Its pathway is cofactor biosynthesis; 7,8-dihydroneopterin triphosphate biosynthesis; 7,8-dihydroneopterin triphosphate from GTP: step 1/1. Functionally, converts GTP to 7,8-dihydroneopterin triphosphate. The polypeptide is GTP cyclohydrolase FolE2 (Bordetella petrii (strain ATCC BAA-461 / DSM 12804 / CCUG 43448)).